Reading from the N-terminus, the 215-residue chain is Adenylate kinase (215 aa).

ATP is bound at residue glycine 10–threonine 15. Residues serine 30 to valine 59 form an NMP region. AMP contacts are provided by residues threonine 31, arginine 36, glutamine 57–valine 59, glycine 85–arginine 88, and glutamine 92. The LID stretch occupies residues glycine 121–aspartate 158. Arginine 122 serves as a coordination point for ATP. Zn(2+) is bound by residues cysteine 125 and cysteine 128. ATP is bound at residue isoleucine 131–phenylalanine 132. Residues cysteine 145 and cysteine 148 each coordinate Zn(2+). 2 residues coordinate AMP: arginine 155 and arginine 166. Residue lysine 194 coordinates ATP.

The protein belongs to the adenylate kinase family. Monomer.

Its subcellular location is the cytoplasm. The catalysed reaction is AMP + ATP = 2 ADP. It functions in the pathway purine metabolism; AMP biosynthesis via salvage pathway; AMP from ADP: step 1/1. Its function is as follows. Catalyzes the reversible transfer of the terminal phosphate group between ATP and AMP. Plays an important role in cellular energy homeostasis and in adenine nucleotide metabolism. The protein is Adenylate kinase of Borrelia recurrentis (strain A1).